The following is a 44-amino-acid chain: Cytochrome b559 subunit beta (44 aa).

A helical transmembrane segment spans residues 19–35 (WVSIHALAVPTIFFLGS). H23 contributes to the heme binding site.

This sequence belongs to the PsbE/PsbF family. As to quaternary structure, heterodimer of an alpha subunit and a beta subunit. PSII is composed of 1 copy each of membrane proteins PsbA, PsbB, PsbC, PsbD, PsbE, PsbF, PsbH, PsbI, PsbJ, PsbK, PsbL, PsbM, PsbT, PsbX, PsbY, PsbZ, Psb30/Ycf12, at least 3 peripheral proteins of the oxygen-evolving complex and a large number of cofactors. It forms dimeric complexes. Requires heme b as cofactor.

It localises to the plastid. Its subcellular location is the chloroplast thylakoid membrane. In terms of biological role, this b-type cytochrome is tightly associated with the reaction center of photosystem II (PSII). PSII is a light-driven water:plastoquinone oxidoreductase that uses light energy to abstract electrons from H(2)O, generating O(2) and a proton gradient subsequently used for ATP formation. It consists of a core antenna complex that captures photons, and an electron transfer chain that converts photonic excitation into a charge separation. The chain is Cytochrome b559 subunit beta from Chlamydomonas moewusii (Chlamydomonas eugametos).